The following is a 366-amino-acid chain: 1-aminocyclopropane-1-carboxylate oxidase homolog 12 (366 aa).

The Fe2OG dioxygenase domain maps to 215–314 (KTLLMICHYY…RISVASFFSS (100 aa)). The Fe cation site is built by H239, D241, and H295. R305 contributes to the 2-oxoglutarate binding site.

This sequence belongs to the iron/ascorbate-dependent oxidoreductase family. Requires Fe(2+) as cofactor.

This is 1-aminocyclopropane-1-carboxylate oxidase homolog 12 from Arabidopsis thaliana (Mouse-ear cress).